A 179-amino-acid chain; its full sequence is Large ribosomal subunit protein uL5 (179 aa).

This sequence belongs to the universal ribosomal protein uL5 family. As to quaternary structure, part of the 50S ribosomal subunit; part of the 5S rRNA/L5/L18/L25 subcomplex. Contacts the 5S rRNA and the P site tRNA. Forms a bridge to the 30S subunit in the 70S ribosome.

This is one of the proteins that bind and probably mediate the attachment of the 5S RNA into the large ribosomal subunit, where it forms part of the central protuberance. In the 70S ribosome it contacts protein S13 of the 30S subunit (bridge B1b), connecting the 2 subunits; this bridge is implicated in subunit movement. Contacts the P site tRNA; the 5S rRNA and some of its associated proteins might help stabilize positioning of ribosome-bound tRNAs. The protein is Large ribosomal subunit protein uL5 of Neisseria meningitidis serogroup A / serotype 4A (strain DSM 15465 / Z2491).